A 373-amino-acid chain; its full sequence is MVAELTALRDQIDSVDKALLDLLAKRLELVAEVGEVKSRYGLPIYVPEREASMLASRRKEAEALGVPPDLIEDVLRRVMRESYTSENDKGFKTLCPELRPVVIVGGKGQMGRLFEKMLGLSGYTVKTLDKEDWPQAETLLSDAGMVIISVPIHLTEQVIAQLPPLPEDCILVDLASVKNRPLQAMLAAHNGPVLGLHPMFGPDSGSLAKQVVVWCDGRQPEAYQWFLEQIQVWGARLHRISAVEHDQNMAFIQALRHFATFAYGLHLAEENVNLDQLLALSSPIYRLELAMVGRLFAQDPQLYADIIMSSESNLALIKRYYQRFGEAIALLEQGDKQAFIASFNRVEQWFGDHAKRFLVESRSLLRSANDSRP.

A Chorismate mutase domain is found at 1–90 (MVAELTALRD…ESYTSENDKG (90 aa)). Residues 99 to 361 (RPVVIVGGKG…DHAKRFLVES (263 aa)) enclose the Prephenate/arogenate dehydrogenase domain.

It in the C-terminal section; belongs to the prephenate/arogenate dehydrogenase family.

It is found in the cytoplasm. It carries out the reaction chorismate = prephenate. The enzyme catalyses prephenate + NAD(+) = 3-(4-hydroxyphenyl)pyruvate + CO2 + NADH. Its pathway is amino-acid biosynthesis; L-tyrosine biosynthesis; (4-hydroxyphenyl)pyruvate from prephenate (NAD(+) route): step 1/1. It functions in the pathway metabolic intermediate biosynthesis; prephenate biosynthesis; prephenate from chorismate: step 1/1. This Enterobacter agglomerans (Erwinia herbicola) protein is T-protein (tyrA).